A 246-amino-acid polypeptide reads, in one-letter code: MRRRPPQLTKTKLADEEVPELTLVPDGVSRWTGSDLDALLNAARRGGAEAAQQDLERKLCRTIDILGARSQQAQEINAVLTSVARLRENSTFRLYLLTQNHRGVGILKVGVKKLFVTHPVTCGLVEVDPLCVLDFYVDESCQRQGYGKMLYSHMLKAEHVSRPEVLAIDRPSNKLLGFLRKHYGLAAYTPQVNNFVVFHSFFDHTTVSERGKLLRAPSPARASPFPSSANATVAIGGAKAKNWTPG.

One can recognise an N-acetyltransferase domain in the interval 21–202 (LTLVPDGVSR…NNFVVFHSFF (182 aa)). Acetyl-CoA is bound by residues 135-148 (FYVD…GYGK) and 172-181 (SNKLLGFLRK).

Belongs to the acetyltransferase ATAT1 family.

The enzyme catalyses L-lysyl-[alpha-tubulin] + acetyl-CoA = N(6)-acetyl-L-lysyl-[alpha-tubulin] + CoA + H(+). Functionally, specifically acetylates 'Lys-40' in alpha-tubulin on the lumenal side of microtubules. Promotes microtubule destabilization and accelerates microtubule dynamics; this activity may be independent of acetylation activity. Acetylates alpha-tubulin with a slow enzymatic rate, due to a catalytic site that is not optimized for acetyl transfer. Enters the microtubule through each end and diffuses quickly throughout the lumen of microtubules. Acetylates only long/old microtubules because of its slow acetylation rate since it does not have time to act on dynamically unstable microtubules before the enzyme is released. This chain is Alpha-tubulin N-acetyltransferase, found in Leishmania major.